Reading from the N-terminus, the 1264-residue chain is TBC1 domain family member 9 (1264 aa).

2 consecutive GRAM domains span residues 146 to 213 (VKFH…EKNA) and 293 to 361 (ERYR…EKAD). Positions 410–456 (KEFSGSCNSSDDEVYSRPSSLVSSSPQRSTSSDADGERPFNLNGNSV) are disordered. Residues 425–441 (SRPSSLVSSSPQRSTSS) are compositionally biased toward low complexity. The Rab-GAP TBC domain maps to 515–702 (GIPESMRGEL…VVVDCFFYEG (188 aa)). In terms of domain architecture, EF-hand spans 886–921 (HSDVLASRLFQLLDENGDSLINFREFVSGLSAACHG). Residues 1119–1138 (SEEHSLGGQMEDIKLEDSSP) show a composition bias toward basic and acidic residues. The segment at 1119 to 1162 (SEEHSLGGQMEDIKLEDSSPRDNGACSSMLISDDDTKDDSSMSS) is disordered.

May act as a GTPase-activating protein for Rab family protein(s). The polypeptide is TBC1 domain family member 9 (Tbc1d9) (Mus musculus (Mouse)).